Reading from the N-terminus, the 413-residue chain is Putative F-box/kelch-repeat protein At4g22430 (413 aa).

The F-box domain occupies 5–54 (NNTITDVLEGIVTEILVRLPLRSISRFKSVSQTWKSAIESVYFRRLFVSL). One copy of the Kelch repeat lies at 168-210 (NMFLNKGEMYMPLYVYSSETGFWIHKEVVCPVRLPNFYDPISL).

The chain is Putative F-box/kelch-repeat protein At4g22430 from Arabidopsis thaliana (Mouse-ear cress).